Reading from the N-terminus, the 551-residue chain is Structure-specific endonuclease subunit MUS81 (551 aa).

Basic and acidic residues predominate over residues 84-93 (HRTSGGDHAP). Positions 84-130 (HRTSGGDHAPDSPSGENSPAPQGRLAEVQDSSMPVPAQPKAGGSGSY) are disordered. Residues serine 95 and serine 101 each carry the phosphoserine modification. An interaction with BLM region spans residues 125 to 244 (GGSGSYWPAR…PGEETAVPGA (120 aa)). The segment at 131–230 (WPARHSGARV…GLSLLNVGIG (100 aa)) is winged helix domain (WHD); critical for endonuclease activity. The 103-residue stretch at 270 to 372 (LLCVDIGETR…RRVYLVEEHG (103 aa)) folds into the ERCC4 domain. Active-site residues include aspartate 274, glutamate 277, and aspartate 307. 5 residues coordinate Mg(2+): aspartate 274, glutamate 277, aspartate 307, glutamate 333, and arginine 334. The tract at residues 471–545 (VREVFARQLM…LSRTLSQLYC (75 aa)) is helix-hairpin-helix (2HhH); involved in DNA recognition and bending.

Belongs to the XPF family. Part of the heterodimeric DNA structure-specific endonuclease complex MUS81-EME1. Part of the heterodimeric DNA structure-specific endonuclease complex MUS81-EME2. Interacts with BLM; may stimulate the endonuclease activity of MUS81. Interacts with SLX4/BTBD12; this interaction is direct and links the MUS81-EME1 complex to SLX4, which may coordinate the action of the structure-specific endonuclease during DNA repair. Interacts with DCLRE1B/Apollo. Interacts with RECQL5; this interaction stimulates mitotic DNA synthesis. Interacts with CHEK2. It depends on Mg(2+) as a cofactor. As to expression, widely expressed.

It is found in the nucleus. The protein localises to the nucleolus. Its function is as follows. Catalytic subunit of two functionally distinct, structure-specific, heterodimeric DNA endonucleases MUS81-EME1 and MUS81-EME2 that are involved in the maintenance of genome stability. Both endonucleases have essentially the same substrate specificity though MUS81-EME2 is more active than its MUS81-EME1 counterpart. Both cleave 3'-flaps and nicked Holliday junctions, and exhibit limited endonuclease activity with 5' flaps and nicked double-stranded DNAs. MUS81-EME2 which is active during the replication of DNA is more specifically involved in replication fork processing. Replication forks frequently encounter obstacles to their passage, including DNA base lesions, DNA interstrand cross-links, difficult-to-replicate sequences, transcription bubbles, or tightly bound proteins. One mechanism for the restart of a stalled replication fork involves nucleolytic cleavage mediated by the MUS81-EME2 endonuclease. By acting upon the stalled fork, MUS81-EME2 generates a DNA double-strand break (DSB) that can be repaired by homologous recombination, leading to the restoration of an active fork. MUS81-EME2 could also function in telomere maintenance. MUS81-EME1, on the other hand, is active later in the cell cycle and functions in the resolution of mitotic recombination intermediates including the Holliday junctions, the four-way DNA intermediates that form during homologous recombination. The sequence is that of Structure-specific endonuclease subunit MUS81 from Homo sapiens (Human).